A 418-amino-acid chain; its full sequence is Gamma-glutamyl phosphate reductase (418 aa).

This sequence belongs to the gamma-glutamyl phosphate reductase family.

It is found in the cytoplasm. It carries out the reaction L-glutamate 5-semialdehyde + phosphate + NADP(+) = L-glutamyl 5-phosphate + NADPH + H(+). It functions in the pathway amino-acid biosynthesis; L-proline biosynthesis; L-glutamate 5-semialdehyde from L-glutamate: step 2/2. Functionally, catalyzes the NADPH-dependent reduction of L-glutamate 5-phosphate into L-glutamate 5-semialdehyde and phosphate. The product spontaneously undergoes cyclization to form 1-pyrroline-5-carboxylate. The protein is Gamma-glutamyl phosphate reductase of Parafrankia sp. (strain EAN1pec).